Reading from the N-terminus, the 150-residue chain is MKLILTADVENLGVAGDIVEVKDGYGRNLLLPRGLAIVATRGAEKQIEGIKRAQEAREIRDLDHAREVKAQLEALEGVSVAVRTSEKGKLFGSVKAEDVAAAVKKAGGPNLDKRSIELPKSLVKATGAYKVNVKLHSDIAATVNFEVVAA.

Belongs to the bacterial ribosomal protein bL9 family.

Its function is as follows. Binds to the 23S rRNA. The chain is Large ribosomal subunit protein bL9 from Corynebacterium diphtheriae (strain ATCC 700971 / NCTC 13129 / Biotype gravis).